Here is a 230-residue protein sequence, read N- to C-terminus: Transmembrane 4 L6 family member 20 (230 aa).

At 1 to 11 the chain is on the lumenal side; that stretch reads MTCCEGWTSCN. The chain crosses the membrane as a helical span at residues 12 to 32; sequence GFSLLVLLLLGVTLNAIPLIL. The Cytoplasmic segment spans residues 33 to 44; sequence NFVDEDQFFENP. Residues 45-65 form a helical membrane-spanning segment; it reads ISCFEWWFPGIIGAGVMAIPA. At 66–83 the chain is on the lumenal side; it reads TTMSLAARKRACCNNKTG. The helical transmembrane segment at 84-104 threads the bilayer; it reads MFLSSLLNAITVIGAAYCLLV. The Cytoplasmic segment spans residues 105-185; it reads SIQALAEGPL…HFNSIENQHR (81 aa). Residues 186-206 form a helical membrane-spanning segment; the sequence is IIHFSVFLGLLLVGILEILFG. Topologically, residues 207–230 are lumenal; sequence LSQIIIGFFGCLCGGVSNGRSQIV.

It belongs to the L6 tetraspanin family. Glycosylated at Asn-132 in presence of ceramide which inverts the orientation of TM4SF20 in membranes exposing these residues to the endoplasmic reticulum lumen. In terms of processing, cleaved by signal peptidase at Ser-14 but the peptide does not act as a signal peptide. Cleavage is inhibited by ceramide which inverts the orientation of TM4SF20 in membranes exposing the N-terminus to the cytosol and not to the endoplasmic reticulum lumen.

Its subcellular location is the membrane. The protein resides in the endoplasmic reticulum membrane. Its function is as follows. Polytopic transmembrane protein. Inhibits regulated intramembrane proteolysis (RIP) of CREB3L1, inhibiting its activation and the induction of collagen synthesis. In response to ceramide, which alters TM4SF20 membrane topology, stimulates RIP activation of CREB3L1. Ceramide reverses the direction through which transmembrane helices are translocated into the endoplasmic reticulum membrane during translation of TM4SF20, this mechanism is called 'regulated alternative translocation' (RAT) and regulates the function of the transmembrane protein. In Bos taurus (Bovine), this protein is Transmembrane 4 L6 family member 20 (TM4SF20).